Reading from the N-terminus, the 380-residue chain is 1-deoxy-D-xylulose 5-phosphate reductoisomerase (380 aa).

The NADPH site is built by Thr10, Gly11, Ser12, Ile13, Gly36, Arg37, Asn38, and Asn120. Lys121 is a binding site for 1-deoxy-D-xylulose 5-phosphate. Residue Glu122 coordinates NADPH. Asp146 is a binding site for Mn(2+). 1-deoxy-D-xylulose 5-phosphate is bound by residues Ser147, Glu148, Ser172, and His195. Mn(2+) is bound at residue Glu148. Residue Gly201 participates in NADPH binding. 1-deoxy-D-xylulose 5-phosphate-binding residues include Ser208, Asn213, Lys214, and Glu217. A Mn(2+)-binding site is contributed by Glu217.

The protein belongs to the DXR family. Mg(2+) serves as cofactor. The cofactor is Mn(2+).

It carries out the reaction 2-C-methyl-D-erythritol 4-phosphate + NADP(+) = 1-deoxy-D-xylulose 5-phosphate + NADPH + H(+). It participates in isoprenoid biosynthesis; isopentenyl diphosphate biosynthesis via DXP pathway; isopentenyl diphosphate from 1-deoxy-D-xylulose 5-phosphate: step 1/6. Catalyzes the NADPH-dependent rearrangement and reduction of 1-deoxy-D-xylulose-5-phosphate (DXP) to 2-C-methyl-D-erythritol 4-phosphate (MEP). This Listeria welshimeri serovar 6b (strain ATCC 35897 / DSM 20650 / CCUG 15529 / CIP 8149 / NCTC 11857 / SLCC 5334 / V8) protein is 1-deoxy-D-xylulose 5-phosphate reductoisomerase.